The following is a 348-amino-acid chain: 3-methyl-2-oxobutanoate dehydrogenase subunit beta (348 aa).

Residues E51, 80–82 (LAE), Q104, and 108–111 (FSYP) each bind thiamine diphosphate. Residues 105–108 (FDGF) and H151 each bind substrate. H151 (proton acceptor) is an active-site residue.

As to quaternary structure, heteromer of E1 alpha (BkdA) and beta (BkdB) subunits. Part of the BCKADH complex, consisting of multiple copies of BkdA/BkdB (E1), BkdC (E2) and Lpd (E3). Requires thiamine diphosphate as cofactor.

It catalyses the reaction N(6)-[(R)-lipoyl]-L-lysyl-[protein] + 3-methyl-2-oxobutanoate + H(+) = N(6)-[(R)-S(8)-2-methylpropanoyldihydrolipoyl]-L-lysyl-[protein] + CO2. In terms of biological role, component of the branched-chain alpha-ketoacid dehydrogenase (BCKADH) complex, that catalyzes the overall conversion of branched-chain alpha-ketoacids to acyl-CoA and CO(2). This chain is 3-methyl-2-oxobutanoate dehydrogenase subunit beta (bkdB), found in Mycobacterium tuberculosis (strain CDC 1551 / Oshkosh).